A 311-amino-acid chain; its full sequence is Halocin-S8 (311 aa).

2 propeptides span residues methionine 1–glutamine 230 and threonine 267–tryptophan 311.

The protein localises to the secreted. Its function is as follows. Has antibacterial activity against the haloarchaeons H.salinarium NRC817, Halobacterium GRB and H.gibbonsii. The protein is Halocin-S8 (halS8) of Haloarchaeon S8a.